Reading from the N-terminus, the 158-residue chain is NADH-quinone oxidoreductase subunit B 1 (158 aa).

[4Fe-4S] cluster is bound by residues cysteine 37, cysteine 38, cysteine 102, and cysteine 132.

It belongs to the complex I 20 kDa subunit family. As to quaternary structure, NDH-1 is composed of 14 different subunits. Subunits NuoB, C, D, E, F, and G constitute the peripheral sector of the complex. [4Fe-4S] cluster is required as a cofactor.

Its subcellular location is the cell inner membrane. The catalysed reaction is a quinone + NADH + 5 H(+)(in) = a quinol + NAD(+) + 4 H(+)(out). Its function is as follows. NDH-1 shuttles electrons from NADH, via FMN and iron-sulfur (Fe-S) centers, to quinones in the respiratory chain. Couples the redox reaction to proton translocation (for every two electrons transferred, four hydrogen ions are translocated across the cytoplasmic membrane), and thus conserves the redox energy in a proton gradient. The sequence is that of NADH-quinone oxidoreductase subunit B 1 from Chromobacterium violaceum (strain ATCC 12472 / DSM 30191 / JCM 1249 / CCUG 213 / NBRC 12614 / NCIMB 9131 / NCTC 9757 / MK).